The following is a 1496-amino-acid chain: MKPLAAPANHGVLGQQEKQSLPADFTKLHLTDSLHPQVTHVSSSHSGCSITSDSGSSSLSDIYQATESEAGDMDLSGLPETAVDSEDDDDEEDIERASDPLMSRDIVRDCLEKDPIDRTDDDIEQLLEFMHQLPAFANMTMSVRRELCAVMVFAVVERAGTIVLNDGEELDSWSVILNGSVEVTYPDGKAEILCMGNSFGVSPTMDKEYMKGVMRTKVDDCQFVCIAQQDYCRILNQVEKNMQKVEEEGEIVMVKEHRELDRTGTRKGHIVIKGTSERLTMHLVEEHSVVDPTFIEDFLLTYRTFLSSPMEVGKKLLEWFNDPSLRDKVTRVVLLWVNNHFNDFEGDPAMTRFLEEFENNLEREKMGGHLRLLNIACAAKAKRRLMTLTKPSREAPLPFILLGGSEKGFGIFVDSVDSCSKATEAGLKRGDQILEVNGQNFENIQLSKAMEILRNNTHLSITVKTNLFVFKELLTRLSEEKRNGAPHLPKIGDIKKASRYSIPDLAVDVEQVIGLEKVNKKSKANTVGGRNKLKKILDKTRISILPQKPYNDIGIGQSQDDSIVGLRQTKHIPAALPVSGTLSSSNPDLLQSHHRILDFSTTPDLPDQVLRVFKADQQSRYIMISKDTTAKEVVIQAIREFAVTATPEQYSLCEVSVTPEGVIKQRRLPDQLSKLADRIQLSGRYYLKNNMETETLCSDEDAQELLRESQISLLQLSTVEVATQLSMRNFELFRNIEPTEYIDDLFKLKSKTSCANLKKFEEVINQETFWVASEILRETNQLKRMKIIKHFIKIALHCRECKNFNSMFAIISGLNLAPVARLRTTWEKLPNKYEKLFQDLQDLFDPSRNMAKYRNVLSGQNLQPPVIPLFPVIKKDLTFLHEGNDSKVDGLVNFEKLRMIAKEIRHVGRMASVNMDPALMFRTRKKKWRSLGSLSQGSANATVLDVAQTGGHKKRVRRSSFLNAKKLYEDAQMARKVKQYLSNLELEMDEESLQTLSLQCEPATSTLPKNPGDKKPVKSETSPVAPRAGPQQKVQPQQPLAQPQPPHKVSQGLQVPAVSLYPSRKKVPVKDLPPFGINSPQALKKILSLSEEGSLERHRKQAEDTISNASSQLSSPPTSPQSSPRKGYALALSGTVDNFSDSGHSEISSRSSIVSNSSFDSVPVSLHDERRQRHSVSIVESNLGVGRMERRTLMEPDQYSLGSYAPVSESRGLYAAATVISSPSTEELSHDQGDRASLDAADSGRGSWTSCSSGSHDNIQTIQHQRSWETLPFGHTHFDYSGDAASIWASGGHMDQMMFSDHSTKYNRQNQSRESLEQAQSRASWASSTGYWGEDSEGDTGTIKRRGGKDVSAEAESSSMVPVTTEEAKPVPMPAHIAVTPSTTKGLIARKEGRYREPPPTPPGYVGIPIADFPEGPCHPARKPPDYNVALQRSRMVARPTEAPAPGQTPPAAAASRPGSKPQWHKPSDADPRLAPFQPQGFAGAEEDEDEQVSAV.

2 disordered regions span residues 40–59 and 68–101; these read HVSSSHSGCSITSDSGSSSL and SEAGDMDLSGLPETAVDSEDDDDEEDIERASDPL. Acidic residues predominate over residues 83–94; that stretch reads VDSEDDDDEEDI. 135-254 serves as a coordination point for a nucleoside 3',5'-cyclic phosphate; it reads AFANMTMSVR…VEEEGEIVMV (120 aa). An N-terminal Ras-GEF domain is found at 267-380; that stretch reads KGHIVIKGTS…RLLNIACAAK (114 aa). One can recognise a PDZ domain in the interval 385-470; the sequence is LMTLTKPSRE…ITVKTNLFVF (86 aa). Ser501 is modified (phosphoserine). The 87-residue stretch at 606 to 692 folds into the Ras-associating domain; that stretch reads PDQVLRVFKA…GRYYLKNNME (87 aa). Thr644 is modified (phosphothreonine; by PLK2). The 228-residue stretch at 717 to 944 folds into the Ras-GEF domain; it reads STVEVATQLS…SQGSANATVL (228 aa). Ser806 is modified (phosphoserine; by PLK2). Ser930 bears the Phosphoserine mark. 2 positions are modified to phosphoserine; by PLK2: Ser933 and Ser1022. The segment at 1002–1051 is disordered; sequence PATSTLPKNPGDKKPVKSETSPVAPRAGPQQKVQPQQPLAQPQPPHKVSQ. Residues 1030–1041 show a composition bias toward low complexity; the sequence is PQQKVQPQQPLA. Residues Ser1079, Ser1088, Ser1094, Ser1115, Ser1119, and Ser1158 each carry the phosphoserine modification. The tract at residues 1093–1159 is disordered; that stretch reads GSLERHRKQA…RSSIVSNSSF (67 aa). Composition is skewed to low complexity over residues 1110-1124 and 1140-1159; these read SSQLSSPPTSPQSSP and SDSGHSEISSRSSIVSNSSF. The residue at position 1175 (Ser1175) is a Phosphoserine; by PLK2. Disordered stretches follow at residues 1224 to 1256, 1303 to 1369, and 1390 to 1496; these read STEELSHDQGDRASLDAADSGRGSWTSCSSGSH, STKY…EEAK, and RKEG…VSAV. Residues 1227 to 1237 are compositionally biased toward basic and acidic residues; the sequence is ELSHDQGDRAS. Composition is skewed to polar residues over residues 1246 to 1256 and 1306 to 1330; these read GSWTSCSSGSH and YNRQNQSRESLEQAQSRASWASSTG. Residues 1440–1455 are compositionally biased toward low complexity; that stretch reads PTEAPAPGQTPPAAAA. The span at 1485–1496 shows a compositional bias: acidic residues; that stretch reads AEEDEDEQVSAV.

The protein belongs to the RAPGEF2 family. In terms of assembly, found in a complex, at least composed of KIDINS220, MAGI2, NTRK1 and RAPGEF2; the complex is mainly formed at late endosomes in a neuronal growth factor (NGF)-dependent manner. Interacts (via C-terminal domain) with NEDD4 (via WW domains); this interaction leads to ubiquitination and degradation via the proteasome pathway in a cAMP-independent manner. Interacts with MAGI1 (via PDZ domain). Interacts with ADRB1 (via C-terminal PDZ motif); the interaction is direct. Interacts (via Ras-associating domain) with RAP1A (via GTP-bound active form). Interacts weakly with HRAS (via GDP- and GTP-bound forms). Interacts (via C-terminal domain) with MAGI2 (via PDZ and WW domains). Interacts with CDH1, CTNNB1 and TJP1. Post-translationally, ubiquitinated by NEDD4, leading to proteasomal degradation. Phosphorylation by PLK2 promotes its activity. In terms of tissue distribution, expressed in all layers of the cerebral cortex, hippocampus and cerebellum. Expressed in the cortical plate, cingulate cortex and the subventricular zone. Expressed in neurons and endocrine cells (at protein level). Expressed in melanoma cells.

Its subcellular location is the cytoplasm. It localises to the perinuclear region. The protein localises to the cell membrane. The protein resides in the late endosome. It is found in the cell junction. Functions as a guanine nucleotide exchange factor (GEF), which activates Rap and Ras family of small GTPases by exchanging bound GDP for free GTP in a cAMP-dependent manner. Serves as a link between cell surface receptors and Rap/Ras GTPases in intracellular signaling cascades. Also acts as an effector for Rap1 by direct association with Rap1-GTP thereby leading to the amplification of Rap1-mediated signaling. Shows weak activity on HRAS. It is controversial whether RAPGEF2 binds cAMP and cGMP or not. Its binding to ligand-activated beta-1 adrenergic receptor ADRB1 leads to the Ras activation through the G(s)-alpha signaling pathway. Involved in the cAMP-induced Ras and Erk1/2 signaling pathway that leads to sustained inhibition of long term melanogenesis by reducing dendrite extension and melanin synthesis. Also provides inhibitory signals for cell proliferation of melanoma cells and promotes their apoptosis in a cAMP-independent nanner. Regulates cAMP-induced neuritogenesis by mediating the Rap1/B-Raf/ERK signaling through a pathway that is independent on both PKA and RAPGEF3/RAPGEF4. Involved in neuron migration and in the formation of the major forebrain fiber connections forming the corpus callosum, the anterior commissure and the hippocampal commissure during brain development. Involved in neuronal growth factor (NGF)-induced sustained activation of Rap1 at late endosomes and in brain-derived neurotrophic factor (BDNF)-induced axon outgrowth of hippocampal neurons. Plays a role in the regulation of embryonic blood vessel formation and in the establishment of basal junction integrity and endothelial barrier function. May be involved in the regulation of the vascular endothelial growth factor receptor KDR and cadherin CDH5 expression at allantois endothelial cell-cell junctions. This Mus musculus (Mouse) protein is Rap guanine nucleotide exchange factor 2 (Rapgef2).